The chain runs to 608 residues: UvrABC system protein C (608 aa).

One can recognise a GIY-YIG domain in the interval 13–91 (HDAGVYRMYD…IKTYQPRYNV (79 aa)). Positions 201–236 (QQVLEHLIHKMEQASLALDFEEAARIRDQIQAVRAV) constitute a UVR domain.

The protein belongs to the UvrC family. As to quaternary structure, interacts with UvrB in an incision complex.

The protein resides in the cytoplasm. Functionally, the UvrABC repair system catalyzes the recognition and processing of DNA lesions. UvrC both incises the 5' and 3' sides of the lesion. The N-terminal half is responsible for the 3' incision and the C-terminal half is responsible for the 5' incision. The protein is UvrABC system protein C of Pasteurella multocida (strain Pm70).